The chain runs to 345 residues: Serine/arginine-rich splicing factor 6 (345 aa).

The RRM 1 domain occupies 1 to 72; the sequence is MPRVYIGRLS…ERVIVEHARG (72 aa). Phosphoserine is present on residues serine 45, serine 81, and serine 84. Residues 75 to 102 are disordered; that stretch reads RDRDGYSYGSRSGGGGYSSRRTSGRDKY. Residues 110–183 enclose the RRM 2 domain; it reads FRLIVENLSS…RNIRLIEDKP (74 aa). An N6-acetyllysine modification is found at lysine 165. The disordered stretch occupies residues 176-345; sequence IRLIEDKPRT…RSRSRSSSRD (170 aa). A Glycyl lysine isopeptide (Lys-Gly) (interchain with G-Cter in SUMO2) cross-link involves residue lysine 182. Positions 185–250 are enriched in basic residues; sequence TSHRRSYSGS…RKSRSKSKSK (66 aa). 2 stretches are compositionally biased toward basic and acidic residues: residues 264 to 273 and 282 to 293; these read RSKDEYEKSR and SPKENGKGDIKS. Residues serine 299 and serine 301 each carry the phosphoserine modification. A Phosphoserine; by DYRK1A modification is found at serine 305. Phosphoserine is present on residues serine 316 and serine 318. Positions 323-345 are enriched in basic residues; the sequence is RASRSHSRSRSKSRSRSRSSSRD.

It belongs to the splicing factor SR family. As to quaternary structure, binds SREK1/SFRS12. Interacts with DYRK1A. Post-translationally, extensively phosphorylated on serine residues in the RS domain. Phosphorylated by DYRK1A, probably in the RS domain. Phosphorylation by DYRK1A modulates alternative splice site selection and inhibits the expression of MAPT/Tau exon 10.

The protein localises to the nucleus. It is found in the nucleus speckle. Its function is as follows. Plays a role in constitutive splicing and modulates the selection of alternative splice sites. Plays a role in the alternative splicing of MAPT/Tau exon 10. Binds to alternative exons of TNC pre-mRNA and promotes the expression of alternatively spliced TNC. Plays a role in wound healing and in the regulation of keratinocyte differentiation and proliferation via its role in alternative splicing. The sequence is that of Serine/arginine-rich splicing factor 6 (SRSF6) from Bos taurus (Bovine).